A 201-amino-acid polypeptide reads, in one-letter code: Transgelin (201 aa).

A2 bears the N-acetylalanine mark. Positions 24–137 (EELEERLVEW…RTVMALGSLA (114 aa)) constitute a Calponin-homology (CH) domain. Residues 154-161 (KKAQEHKR) are could be involved in actin-binding. S166 bears the Phosphoserine mark. K172 is subject to N6-acetyllysine. One copy of the Calponin-like repeat lies at 175–200 (IGLQMGSNRGASQAGMTGYGRPRQII). S181 carries the phosphoserine modification. R183 is modified (omega-N-methylarginine).

The protein belongs to the calponin family. As to expression, smooth muscle and mesenchymal cells but not in skeletal muscle or lymphocytes.

Its subcellular location is the cytoplasm. Functionally, actin cross-linking/gelling protein. In Rattus norvegicus (Rat), this protein is Transgelin (Tagln).